Reading from the N-terminus, the 1609-residue chain is Probable cation-transporting ATPase I (1609 aa).

Transmembrane regions (helical) follow at residues 30-50, 176-196, 238-258, 357-377, 641-661, 673-693, 778-798, 921-941, 969-989, and 997-1017; these read GAVNTMQMLASPVAEFAWPVV, LAILMPLTAAVMDLVALSAAV, IALSITTAAASGLTQAVGTPL, LIAAASALLAGGGTEDAAGAI, VHLAQGGTTLAGLLLITASAG, WFSPVNAAAATALVTGVVSAS, ILAVGAAASAIVGSNIDALLV, LFEGSAIVAGHARAIVVATGV, TSKVLPLTLAGGAAVTGLALL, and AVADGVAIAVAAVPEGLPLVA. Catalysis depends on aspartate 1053, which acts as the 4-aspartylphosphate intermediate. 2 residues coordinate Mg(2+): aspartate 1335 and aspartate 1339. The next 2 helical transmembrane spans lie at 1396–1416 and 1426–1446; these read ILVGGNVGEVVFTIIGTVFGA and LLLVNLLTDMFPALSIAVTSQ. The tract at residues 1447-1476 is disordered; it reads YEEPGEDEYQTDEEADEARRTHQHEVLTGP. Positions 1449 to 1462 are enriched in acidic residues; it reads EPGEDEYQTDEEAD. A run of 2 helical transmembrane segments spans residues 1542 to 1562 and 1573 to 1593; these read VVATALGSAGVLIGIIQTPVI and PIAWSGVITATAGATAVSVLA.

It belongs to the cation transport ATPase (P-type) (TC 3.A.3) family.

The protein resides in the cell membrane. The enzyme catalyses ATP + H2O = ADP + phosphate + H(+). In Mycobacterium leprae (strain TN), this protein is Probable cation-transporting ATPase I (ctpI).